Consider the following 431-residue polypeptide: Trigger factor (431 aa).

The region spanning 163–248 (GHFAVIDFTG…LSEIKVKELP (86 aa)) is the PPIase FKBP-type domain.

This sequence belongs to the FKBP-type PPIase family. Tig subfamily.

It localises to the cytoplasm. It carries out the reaction [protein]-peptidylproline (omega=180) = [protein]-peptidylproline (omega=0). Its function is as follows. Involved in protein export. Acts as a chaperone by maintaining the newly synthesized protein in an open conformation. Functions as a peptidyl-prolyl cis-trans isomerase. This is Trigger factor from Geobacter sulfurreducens (strain ATCC 51573 / DSM 12127 / PCA).